The following is a 536-amino-acid chain: Testis-specific expressed protein 55 (536 aa).

Positions 1–11 (MEEPPQEALAE) are enriched in low complexity. Disordered regions lie at residues 1-287 (MEEP…PGTS) and 328-348 (SNADQPPVDNAHYTESDQTDH). A compositionally biased stretch (basic and acidic residues) spans 35-52 (QKNQAERKADNHTAHRIA). Polar residues-rich tracts occupy residues 62-85 (QAESSIFSQATNGVAEQNGHSTPG) and 105-136 (QVNQTPSEQTKGKASSQANNVQHEQSDGQVSG). Composition is skewed to basic and acidic residues over residues 138 to 158 (TEERTAEQTERRLPTQAERRT) and 173 to 222 (RGSR…ERRP). Low complexity predominate over residues 226 to 242 (IDSGSSVPSDQSPSVQI). A compositionally biased stretch (polar residues) spans 243–255 (DSGSSVPSDQRPS). Basic and acidic residues predominate over residues 339 to 348 (HYTESDQTDH).

As to expression, testis-specific.

The protein resides in the nucleus. It localises to the cell projection. The protein localises to the cilium. It is found in the flagellum. In Homo sapiens (Human), this protein is Testis-specific expressed protein 55.